Reading from the N-terminus, the 385-residue chain is 8-amino-7-oxononanoate synthase (385 aa).

Residue Arg-21 participates in substrate binding. 108-109 (GF) provides a ligand contact to pyridoxal 5'-phosphate. His-133 serves as a coordination point for substrate. Pyridoxal 5'-phosphate is bound by residues Ser-179, His-207, and Thr-233. Lys-236 carries the post-translational modification N6-(pyridoxal phosphate)lysine. Residue Thr-352 coordinates substrate.

This sequence belongs to the class-II pyridoxal-phosphate-dependent aminotransferase family. BioF subfamily. As to quaternary structure, homodimer. Pyridoxal 5'-phosphate is required as a cofactor.

The enzyme catalyses 6-carboxyhexanoyl-[ACP] + L-alanine + H(+) = (8S)-8-amino-7-oxononanoate + holo-[ACP] + CO2. The protein operates within cofactor biosynthesis; biotin biosynthesis. Its function is as follows. Catalyzes the decarboxylative condensation of pimeloyl-[acyl-carrier protein] and L-alanine to produce 8-amino-7-oxononanoate (AON), [acyl-carrier protein], and carbon dioxide. The polypeptide is 8-amino-7-oxononanoate synthase (Salmonella arizonae (strain ATCC BAA-731 / CDC346-86 / RSK2980)).